The chain runs to 128 residues: Glycine cleavage system H protein (128 aa).

Positions 24–106 (LVRIGISEFA…HGEGWLLIIR (83 aa)) constitute a Lipoyl-binding domain. K65 carries the post-translational modification N6-lipoyllysine.

It belongs to the GcvH family. As to quaternary structure, the glycine cleavage system is composed of four proteins: P, T, L and H. Requires (R)-lipoate as cofactor.

The glycine cleavage system catalyzes the degradation of glycine. The H protein shuttles the methylamine group of glycine from the P protein to the T protein. In Prochlorococcus marinus (strain NATL1A), this protein is Glycine cleavage system H protein.